A 252-amino-acid chain; its full sequence is Large ribosomal subunit protein uL4 (252 aa).

The protein belongs to the universal ribosomal protein uL4 family. As to quaternary structure, part of the 50S ribosomal subunit.

Its function is as follows. One of the primary rRNA binding proteins, this protein initially binds near the 5'-end of the 23S rRNA. It is important during the early stages of 50S assembly. It makes multiple contacts with different domains of the 23S rRNA in the assembled 50S subunit and ribosome. Functionally, forms part of the polypeptide exit tunnel. The sequence is that of Large ribosomal subunit protein uL4 from Methanococcus maripaludis (strain DSM 14266 / JCM 13030 / NBRC 101832 / S2 / LL).